The chain runs to 206 residues: dITP/XTP pyrophosphatase (206 aa).

Residue 7–12 participates in substrate binding; that stretch reads SNNAKK. Residue D72 is the Proton acceptor of the active site. D72 provides a ligand contact to Mg(2+). Substrate-binding positions include S73, 155 to 158, K182, and 187 to 188; these read FGYD and HR.

It belongs to the HAM1 NTPase family. In terms of assembly, homodimer. Mg(2+) is required as a cofactor.

It carries out the reaction XTP + H2O = XMP + diphosphate + H(+). It catalyses the reaction dITP + H2O = dIMP + diphosphate + H(+). The enzyme catalyses ITP + H2O = IMP + diphosphate + H(+). In terms of biological role, pyrophosphatase that catalyzes the hydrolysis of nucleoside triphosphates to their monophosphate derivatives, with a high preference for the non-canonical purine nucleotides XTP (xanthosine triphosphate), dITP (deoxyinosine triphosphate) and ITP. Seems to function as a house-cleaning enzyme that removes non-canonical purine nucleotides from the nucleotide pool, thus preventing their incorporation into DNA/RNA and avoiding chromosomal lesions. This chain is dITP/XTP pyrophosphatase, found in Corynebacterium glutamicum (strain R).